Reading from the N-terminus, the 68-residue chain is Large ribosomal subunit protein bL35 (68 aa).

It belongs to the bacterial ribosomal protein bL35 family.

The sequence is that of Large ribosomal subunit protein bL35 from Fusobacterium nucleatum subsp. nucleatum (strain ATCC 25586 / DSM 15643 / BCRC 10681 / CIP 101130 / JCM 8532 / KCTC 2640 / LMG 13131 / VPI 4355).